We begin with the raw amino-acid sequence, 333 residues long: 4-hydroxy-3-methylbut-2-enyl diphosphate reductase (333 aa).

C34 provides a ligand contact to [4Fe-4S] cluster. 2 residues coordinate (2E)-4-hydroxy-3-methylbut-2-enyl diphosphate: H63 and H96. H63 and H96 together coordinate dimethylallyl diphosphate. The isopentenyl diphosphate site is built by H63 and H96. [4Fe-4S] cluster is bound at residue C118. Residue H146 coordinates (2E)-4-hydroxy-3-methylbut-2-enyl diphosphate. H146 serves as a coordination point for dimethylallyl diphosphate. Position 146 (H146) interacts with isopentenyl diphosphate. The active-site Proton donor is the E148. T186 lines the (2E)-4-hydroxy-3-methylbut-2-enyl diphosphate pocket. C216 contacts [4Fe-4S] cluster. The (2E)-4-hydroxy-3-methylbut-2-enyl diphosphate site is built by S244, S245, N246, and S289. Dimethylallyl diphosphate is bound by residues S244, S245, N246, and S289. Positions 244, 245, 246, and 289 each coordinate isopentenyl diphosphate.

The protein belongs to the IspH family. Requires [4Fe-4S] cluster as cofactor.

The enzyme catalyses isopentenyl diphosphate + 2 oxidized [2Fe-2S]-[ferredoxin] + H2O = (2E)-4-hydroxy-3-methylbut-2-enyl diphosphate + 2 reduced [2Fe-2S]-[ferredoxin] + 2 H(+). The catalysed reaction is dimethylallyl diphosphate + 2 oxidized [2Fe-2S]-[ferredoxin] + H2O = (2E)-4-hydroxy-3-methylbut-2-enyl diphosphate + 2 reduced [2Fe-2S]-[ferredoxin] + 2 H(+). Its pathway is isoprenoid biosynthesis; dimethylallyl diphosphate biosynthesis; dimethylallyl diphosphate from (2E)-4-hydroxy-3-methylbutenyl diphosphate: step 1/1. It participates in isoprenoid biosynthesis; isopentenyl diphosphate biosynthesis via DXP pathway; isopentenyl diphosphate from 1-deoxy-D-xylulose 5-phosphate: step 6/6. Its function is as follows. Catalyzes the conversion of 1-hydroxy-2-methyl-2-(E)-butenyl 4-diphosphate (HMBPP) into a mixture of isopentenyl diphosphate (IPP) and dimethylallyl diphosphate (DMAPP). Acts in the terminal step of the DOXP/MEP pathway for isoprenoid precursor biosynthesis. The protein is 4-hydroxy-3-methylbut-2-enyl diphosphate reductase of Mycolicibacterium gilvum (strain PYR-GCK) (Mycobacterium gilvum (strain PYR-GCK)).